The sequence spans 418 residues: Actin-related protein 3 (418 aa).

It belongs to the actin family. ARP3 subfamily. As to quaternary structure, component of the Arp2/3 complex composed of actr2/arp2, actr3/arp3, arpc1b, arpc2, arpc3, arpc4 and arpc5.

The protein localises to the cytoplasm. The protein resides in the cytoskeleton. It is found in the cell projection. Its subcellular location is the nucleus. ATP-binding component of the Arp2/3 complex, a multiprotein complex that mediates actin polymerization upon stimulation by nucleation-promoting factor (NPF). The Arp2/3 complex mediates the formation of branched actin networks in the cytoplasm, providing the force for cell motility. Seems to contact the pointed end of the daughter actin filament. In addition to its role in the cytoplasmic cytoskeleton, the Arp2/3 complex also promotes actin polymerization in the nucleus, thereby regulating gene transcription and repair of damaged DNA. The Arp2/3 complex promotes homologous recombination (HR) repair in response to DNA damage by promoting nuclear actin polymerization, leading to drive motility of double-strand breaks (DSBs). This Takifugu rubripes (Japanese pufferfish) protein is Actin-related protein 3 (actr3).